Consider the following 335-residue polypeptide: Heat-inducible transcription repressor HrcA (335 aa).

Belongs to the HrcA family.

Its function is as follows. Negative regulator of class I heat shock genes (grpE-dnaK-dnaJ and groELS operons). Prevents heat-shock induction of these operons. The polypeptide is Heat-inducible transcription repressor HrcA (Mesomycoplasma hyopneumoniae (strain 232) (Mycoplasma hyopneumoniae)).